The following is a 154-amino-acid chain: Xanthine-guanine phosphoribosyltransferase (154 aa).

5-phospho-alpha-D-ribose 1-diphosphate contacts are provided by residues 37–38 (RG) and 90–98 (DDLVDTGNT). Asp-91 is a binding site for Mg(2+). Residues Asp-94 and Ile-137 each contribute to the guanine site. Residues Asp-94 and Ile-137 each contribute to the xanthine site. GMP contacts are provided by residues 94–98 (DTGNT) and 136–137 (WI).

The protein belongs to the purine/pyrimidine phosphoribosyltransferase family. XGPT subfamily. Homotetramer. The cofactor is Mg(2+).

Its subcellular location is the cell inner membrane. The catalysed reaction is GMP + diphosphate = guanine + 5-phospho-alpha-D-ribose 1-diphosphate. It carries out the reaction XMP + diphosphate = xanthine + 5-phospho-alpha-D-ribose 1-diphosphate. It catalyses the reaction IMP + diphosphate = hypoxanthine + 5-phospho-alpha-D-ribose 1-diphosphate. It functions in the pathway purine metabolism; GMP biosynthesis via salvage pathway; GMP from guanine: step 1/1. Its pathway is purine metabolism; XMP biosynthesis via salvage pathway; XMP from xanthine: step 1/1. Functionally, purine salvage pathway enzyme that catalyzes the transfer of the ribosyl-5-phosphate group from 5-phospho-alpha-D-ribose 1-diphosphate (PRPP) to the N9 position of the 6-oxopurines guanine and xanthine to form the corresponding ribonucleotides GMP (guanosine 5'-monophosphate) and XMP (xanthosine 5'-monophosphate), with the release of PPi. To a lesser extent, also acts on hypoxanthine. This is Xanthine-guanine phosphoribosyltransferase from Histophilus somni (strain 129Pt) (Haemophilus somnus).